The sequence spans 382 residues: Galactokinase (382 aa).

E34–D37 contacts substrate. Residue G124–S130 participates in ATP binding. 2 residues coordinate Mg(2+): S130 and E162. Catalysis depends on D174, which acts as the Proton acceptor. Y223 lines the substrate pocket.

The protein belongs to the GHMP kinase family. GalK subfamily.

Its subcellular location is the cytoplasm. The catalysed reaction is alpha-D-galactose + ATP = alpha-D-galactose 1-phosphate + ADP + H(+). It participates in carbohydrate metabolism; galactose metabolism. Functionally, catalyzes the transfer of the gamma-phosphate of ATP to D-galactose to form alpha-D-galactose-1-phosphate (Gal-1-P). This is Galactokinase from Salmonella heidelberg (strain SL476).